The primary structure comprises 930 residues: Translation initiation factor IF-2 (930 aa).

The disordered stretch occupies residues 27–342 (LGLDVKSHSS…APKPVTERKF (316 aa)). Over residues 52–103 (KAAAPQAPAEKPVAAQPSPQKTPAKEAAPVKAEPTEAKAAAQPEAKTETAAP) the composition is skewed to low complexity. 2 stretches are compositionally biased toward basic and acidic residues: residues 112–128 (FKAE…ERRK) and 136–178 (QNKE…DGRR). Over residues 183 to 195 (HQGFNGQKRQQPQ) the composition is skewed to polar residues. Residues 218-245 (RSSEERFKQAQEAKEVMERQNRRKEQPK) are compositionally biased toward basic and acidic residues. Positions 251-268 (PVQPAPAPSAPAANPSPA) are enriched in pro residues. The span at 280–297 (ARPDKKRDDFDREEEGPR) shows a compositional bias: basic and acidic residues. Residues 302–318 (NRSSQNQVRNQRNSNWN) are compositionally biased toward low complexity. Residues 432–599 (ERPPVVTIMG…TVLLVAEIQE (168 aa)) enclose the tr-type G domain. The segment at 441–448 (GHVDHGKT) is G1. Residue 441–448 (GHVDHGKT) coordinates GTP. Residues 466-470 (GITQH) form a G2 region. Positions 487-490 (DTPG) are G3. GTP is bound by residues 487 to 491 (DTPGH) and 541 to 544 (NKID). Positions 541-544 (NKID) are G4. The segment at 577-579 (SAK) is G5.

Belongs to the TRAFAC class translation factor GTPase superfamily. Classic translation factor GTPase family. IF-2 subfamily.

The protein localises to the cytoplasm. In terms of biological role, one of the essential components for the initiation of protein synthesis. Protects formylmethionyl-tRNA from spontaneous hydrolysis and promotes its binding to the 30S ribosomal subunits. Also involved in the hydrolysis of GTP during the formation of the 70S ribosomal complex. The polypeptide is Translation initiation factor IF-2 (Streptococcus sanguinis (strain SK36)).